A 208-amino-acid polypeptide reads, in one-letter code: Histone H1t (208 aa).

Residues 1 to 16 are compositionally biased toward low complexity; sequence MSETVPAASAGAVPAV. The segment at 1-40 is disordered; the sequence is MSETVPAASAGAVPAVMEKPLTKKRGKKPAGLTSASRKAP. Residue Ser9 is modified to Phosphoserine. Residues 40–113 enclose the H15 domain; it reads PNLSVSKLIT…GASGSFKLSK (74 aa). The residue at position 58 (Arg58) is a Citrulline. Residues 102-208 form a disordered region; the sequence is GTGASGSFKL…ANIRKATSRK (107 aa). The segment covering 111 to 136 has biased composition (basic residues); the sequence is LSKKVLPKSTRRKANKSASAKTKKLV. Position 143 is a phosphoserine (Ser143). Residues 148–157 show a composition bias toward basic residues; it reads KTNKRAKKPR. Residue Thr159 is modified to Phosphothreonine. Over residues 163–175 the composition is skewed to basic residues; sequence KAVRSGRKAKGAK. Ser167 and Ser182 each carry phosphoserine. The segment covering 187–208 has biased composition (basic residues); the sequence is RATKPKLTQHHKANIRKATSRK.

The protein belongs to the histone H1/H5 family. In terms of processing, phosphorylated in early spermatids. Citrullination at Arg-58 (H1R54ci) by PADI4 takes place within the DNA-binding site of H1 and results in its displacement from chromatin and global chromatin decondensation, thereby promoting pluripotency and stem cell maintenance.

In terms of biological role, testis-specific histone H1 that forms less compacted chromatin compared to other H1 histone subtypes. Formation of more relaxed chromatin may be required to promote chromatin architecture required for proper chromosome regulation during meiosis, such as homologous recombination. Histones H1 act as linkers that bind to nucleosomes and compact polynucleosomes into a higher-order chromatin configuration. The protein is Histone H1t of Macaca mulatta (Rhesus macaque).